The chain runs to 837 residues: Tuftelin-interacting protein 11 (837 aa).

2 stretches are compositionally biased toward basic and acidic residues: residues 1–13 (MSLS…GEGR) and 50–64 (TYGV…DERP). 2 disordered regions span residues 1-21 (MSLS…DDER) and 50-136 (TYGV…AGGT). Residues 1–50 (MSLSHLYRDGEGRVDDDDDERENFEITDWDLQNEFNPNRQRHWQTKEEAT) form a required for interaction with DHX15 region. Phosphoserine is present on residues serine 2, serine 59, and serine 98. Residues 91–102 (EEAELDDSEDEE) show a composition bias toward acidic residues. Residues 103–116 (KPGKQEELPKDLGP) show a composition bias toward basic and acidic residues. Serine 144 is modified (phosphoserine). Positions 149–195 (TKGIGQKLLQKMGYVPGRGLGKNAQGIINPIEAKQRKGKGAVGAYGS) constitute a G-patch domain. Positions 183-236 (QRKGKGAVGAYGSERTTQSLQDFPVVDSEEEAEEEFQKELSQWRKDPSGSKKKP) are disordered. Serine 210 carries the post-translational modification Phosphoserine. Residues 217-231 (EFQKELSQWRKDPSG) are compositionally biased toward basic and acidic residues. A Nuclear localization signal motif is present at residues 700–705 (VKDKFN). Positions 710–734 (IMNRAVSSNVGAYMQPGARENIAYL) are required for nuclear speckle localization.

The protein belongs to the TFP11/STIP family. In terms of assembly, identified in the spliceosome C complex. Found in the Intron Large (IL) complex, a post-mRNA release spliceosomal complex containing the excised intron, U2, U5 and U6 snRNPs, and splicing factors. Interacts with TUFT1. Interacts with DHX15; indicative for a recruitment of DHX15 to the IL complex. Interacts with GCFC2.

The protein localises to the cytoplasm. It localises to the nucleus. Functionally, involved in pre-mRNA splicing, specifically in spliceosome disassembly during late-stage splicing events. Intron turnover seems to proceed through reactions in two lariat-intron associated complexes termed Intron Large (IL) and Intron Small (IS). In cooperation with DHX15 seems to mediate the transition of the U2, U5 and U6 snRNP-containing IL complex to the snRNP-free IS complex leading to efficient debranching and turnover of excised introns. May play a role in the differentiation of ameloblasts and odontoblasts or in the forming of the enamel extracellular matrix. In Oryctolagus cuniculus (Rabbit), this protein is Tuftelin-interacting protein 11 (TFIP11).